Consider the following 90-residue polypeptide: uncharacterized protein (90 aa).

A run of 2 helical transmembrane segments spans residues 23 to 43 (ITTI…VGLF) and 48 to 68 (VTLL…IIGF).

The protein resides in the cell membrane. This is an uncharacterized protein from Rickettsia prowazekii (strain Madrid E).